Here is a 211-residue protein sequence, read N- to C-terminus: Glycerol-3-phosphate acyltransferase (211 aa).

Helical transmembrane passes span 10-30 (FTTW…FGLL), 63-83 (ALTL…IKFL), 90-110 (NIFI…PVWL), 126-146 (LGLY…LFLI), and 152-172 (LSAL…YPYL).

Belongs to the PlsY family. Probably interacts with PlsX.

The protein localises to the cell inner membrane. The catalysed reaction is an acyl phosphate + sn-glycerol 3-phosphate = a 1-acyl-sn-glycero-3-phosphate + phosphate. It functions in the pathway lipid metabolism; phospholipid metabolism. Catalyzes the transfer of an acyl group from acyl-phosphate (acyl-PO(4)) to glycerol-3-phosphate (G3P) to form lysophosphatidic acid (LPA). This enzyme utilizes acyl-phosphate as fatty acyl donor, but not acyl-CoA or acyl-ACP. The polypeptide is Glycerol-3-phosphate acyltransferase (Bartonella henselae (strain ATCC 49882 / DSM 28221 / CCUG 30454 / Houston 1) (Rochalimaea henselae)).